Consider the following 118-residue polypeptide: Beta-2-microglobulin (118 aa).

Positions 1–21 (MESRWGIVVIGLLCCVSWVEA) are cleaved as a signal peptide. The Ig-like C1-type domain occupies 26 to 113 (PKIQVYTRSP…THNSVTKSVK (88 aa)). An intrachain disulfide couples Cys46 to Cys101.

Belongs to the beta-2-microglobulin family. Heterodimer of an alpha chain and a beta chain. Beta-2-microglobulin is the beta-chain of major histocompatibility complex class I molecules.

The protein resides in the secreted. In terms of biological role, component of the class I major histocompatibility complex (MHC). Involved in the presentation of peptide antigens to the immune system. The chain is Beta-2-microglobulin (B2M) from Tachyglossus aculeatus aculeatus (Southeast Australian short-beaked echidna).